Consider the following 132-residue polypeptide: Small ribosomal subunit protein uS8 (132 aa).

This sequence belongs to the universal ribosomal protein uS8 family. In terms of assembly, part of the 30S ribosomal subunit. Contacts proteins S5 and S12.

Functionally, one of the primary rRNA binding proteins, it binds directly to 16S rRNA central domain where it helps coordinate assembly of the platform of the 30S subunit. The sequence is that of Small ribosomal subunit protein uS8 from Geotalea uraniireducens (strain Rf4) (Geobacter uraniireducens).